A 300-amino-acid polypeptide reads, in one-letter code: Dihydroorotate dehydrogenase B (NAD(+)), catalytic subunit (300 aa).

Residues S21 and 45 to 46 (KS) each bind FMN. Residues K45, 69-73 (NAVGL), and N125 contribute to the substrate site. Residue N125 coordinates FMN. The active-site Nucleophile is C128. 2 residues coordinate FMN: K163 and I187. Substrate is bound at residue 188 to 189 (NT). FMN-binding positions include G213, 239-240 (GG), and 261-262 (GT).

This sequence belongs to the dihydroorotate dehydrogenase family. Type 1 subfamily. Heterotetramer of 2 PyrK and 2 PyrD type B subunits. It depends on FMN as a cofactor.

It localises to the cytoplasm. It catalyses the reaction (S)-dihydroorotate + NAD(+) = orotate + NADH + H(+). Its pathway is pyrimidine metabolism; UMP biosynthesis via de novo pathway; orotate from (S)-dihydroorotate (NAD(+) route): step 1/1. Functionally, catalyzes the conversion of dihydroorotate to orotate with NAD(+) as electron acceptor. The protein is Dihydroorotate dehydrogenase B (NAD(+)), catalytic subunit (pyrD) of Thermoplasma acidophilum (strain ATCC 25905 / DSM 1728 / JCM 9062 / NBRC 15155 / AMRC-C165).